A 433-amino-acid chain; its full sequence is PHO85 cyclin-10 (433 aa).

The span at 1-10 (MDMTKNHTTD) shows a compositional bias: basic and acidic residues. 2 disordered regions span residues 1 to 20 (MDMT…GDIR) and 51 to 81 (LTSE…TTDS). Residues 51-63 (LTSEWDQSRSNTP) are compositionally biased toward polar residues.

It belongs to the cyclin family. PHO80 subfamily. In terms of assembly, forms a cyclin-CDK complex with PHO85. Interacts with GSY2, independent of the presence of PHO85.

It localises to the cytoplasm. Cyclin partner of the cyclin-dependent kinase (CDK) PHO85. Together with cyclin PCL8, negatively controls glycogen accumulation under favorable growth conditions. The PCL10-PHO85 cyclin-CDK holoenzyme has glycogen synthase kinase activity and phosphorylates and negatively regulates glycogen synthase GSY2. Also has minor GLC8 kinase activity. This is PHO85 cyclin-10 (PCL10) from Saccharomyces cerevisiae (strain ATCC 204508 / S288c) (Baker's yeast).